A 114-amino-acid polypeptide reads, in one-letter code: Protein U68 (114 aa).

Belongs to the herpesviridae UL96 family.

This Human herpesvirus 6A (strain Uganda-1102) (HHV-6 variant A) protein is Protein U68 (U68).